Consider the following 172-residue polypeptide: Protein 3 (172 aa).

This chain is Protein 3 (3), found in Northern cereal mosaic virus (NCMV).